We begin with the raw amino-acid sequence, 457 residues long: Siroheme synthase (457 aa).

The interval 4-202 (LPIFCQLRDR…ANADEKAVNA (199 aa)) is precorrin-2 dehydrogenase /sirohydrochlorin ferrochelatase. NAD(+)-binding positions include 22-23 (DV) and 43-44 (LT). The residue at position 128 (S128) is a Phosphoserine. Positions 216 to 448 (GEVVLVGAGP…IIVGRVVALR (233 aa)) are uroporphyrinogen-III C-methyltransferase. Residue P225 coordinates S-adenosyl-L-methionine. The active-site Proton acceptor is D248. K270 acts as the Proton donor in catalysis. S-adenosyl-L-methionine contacts are provided by residues 301–303 (GGD), I306, 331–332 (TA), M382, G411, and A437.

This sequence in the N-terminal section; belongs to the precorrin-2 dehydrogenase / sirohydrochlorin ferrochelatase family. In the C-terminal section; belongs to the precorrin methyltransferase family. In terms of assembly, homodimer.

The enzyme catalyses uroporphyrinogen III + 2 S-adenosyl-L-methionine = precorrin-2 + 2 S-adenosyl-L-homocysteine + H(+). The catalysed reaction is precorrin-2 + NAD(+) = sirohydrochlorin + NADH + 2 H(+). It catalyses the reaction siroheme + 2 H(+) = sirohydrochlorin + Fe(2+). It functions in the pathway cofactor biosynthesis; adenosylcobalamin biosynthesis; precorrin-2 from uroporphyrinogen III: step 1/1. It participates in cofactor biosynthesis; adenosylcobalamin biosynthesis; sirohydrochlorin from precorrin-2: step 1/1. Its pathway is porphyrin-containing compound metabolism; siroheme biosynthesis; precorrin-2 from uroporphyrinogen III: step 1/1. The protein operates within porphyrin-containing compound metabolism; siroheme biosynthesis; siroheme from sirohydrochlorin: step 1/1. It functions in the pathway porphyrin-containing compound metabolism; siroheme biosynthesis; sirohydrochlorin from precorrin-2: step 1/1. In terms of biological role, multifunctional enzyme that catalyzes the SAM-dependent methylations of uroporphyrinogen III at position C-2 and C-7 to form precorrin-2 via precorrin-1. Then it catalyzes the NAD-dependent ring dehydrogenation of precorrin-2 to yield sirohydrochlorin. Finally, it catalyzes the ferrochelation of sirohydrochlorin to yield siroheme. The chain is Siroheme synthase from Salmonella typhimurium (strain LT2 / SGSC1412 / ATCC 700720).